The following is a 475-amino-acid chain: Bifunctional protein HldE (475 aa).

Positions 1-321 are ribokinase; it reads MADKIDISLY…RALHQITASH (321 aa). ATP is bound at residue 197–200; it reads NLKE. D266 is an active-site residue. The tract at residues 346-475 is cytidylyltransferase; sequence MTNGCFDILH…TSRLVEKMLN (130 aa).

The protein in the N-terminal section; belongs to the carbohydrate kinase PfkB family. In the C-terminal section; belongs to the cytidylyltransferase family. Homodimer.

It carries out the reaction D-glycero-beta-D-manno-heptose 7-phosphate + ATP = D-glycero-beta-D-manno-heptose 1,7-bisphosphate + ADP + H(+). The catalysed reaction is D-glycero-beta-D-manno-heptose 1-phosphate + ATP + H(+) = ADP-D-glycero-beta-D-manno-heptose + diphosphate. It functions in the pathway nucleotide-sugar biosynthesis; ADP-L-glycero-beta-D-manno-heptose biosynthesis; ADP-L-glycero-beta-D-manno-heptose from D-glycero-beta-D-manno-heptose 7-phosphate: step 1/4. Its pathway is nucleotide-sugar biosynthesis; ADP-L-glycero-beta-D-manno-heptose biosynthesis; ADP-L-glycero-beta-D-manno-heptose from D-glycero-beta-D-manno-heptose 7-phosphate: step 3/4. Functionally, catalyzes the phosphorylation of D-glycero-D-manno-heptose 7-phosphate at the C-1 position to selectively form D-glycero-beta-D-manno-heptose-1,7-bisphosphate. In terms of biological role, catalyzes the ADP transfer from ATP to D-glycero-beta-D-manno-heptose 1-phosphate, yielding ADP-D-glycero-beta-D-manno-heptose. This is Bifunctional protein HldE from Coxiella burnetii (strain RSA 331 / Henzerling II).